The chain runs to 1770 residues: Transposon Ty2-OR1 Gag-Pol polyprotein (1770 aa).

Composition is skewed to polar residues over residues 1 to 39 and 49 to 60; these read MESQ…SASN and KVNSQQETTPGT. Disordered regions lie at residues 1-88 and 359-449; these read MESQ…YQQH and QHSE…SNDE. The RNA-binding stretch occupies residues 295 to 397; that stretch reads ENNINVSDRL…SSKPRAAKAH (103 aa). The span at 369–381 shows a compositional bias: low complexity; sequence TSPNTTNTKVTTR. Composition is skewed to polar residues over residues 399-408 and 415-435; these read IATSSKFSRV and ESTV…GQQQ. The active-site For protease activity; shared with dimeric partner is Asp-457. An integrase-type zinc finger-like region spans residues 579–636; the sequence is NVNKSKSVNKYPYPLIHRMLGHANFRSIQKSLKKNAVTYLKESDIEWSNASTYQCPDC. The Integrase catalytic domain occupies 656–831; it reads ESYEPFQYLH…AGLDITTILP (176 aa). Mg(2+) contacts are provided by Asp-667 and Asp-732. 3 stretches are compositionally biased toward polar residues: residues 916-929, 1009-1024, and 1065-1082; these read FIEQ…YDQN, ESDT…FTAR, and QRNS…STPS. 3 disordered regions span residues 916–935, 1005–1038, and 1057–1205; these read FIEQ…SDHD, GGTI…MIDL, and GGTE…TEIE. A Bipartite nuclear localization signal motif is present at residues 1193–1227; it reads KKRSLEDNETEIEVSRDTWNNKNMRSLEPPRSKKR. The Reverse transcriptase Ty1/copia-type domain maps to 1353–1491; that stretch reads NDYYITQLDI…DILGLEIKYQ (139 aa). Asp-1361, Asp-1442, Asp-1443, Asp-1625, Glu-1667, and Asp-1700 together coordinate Mg(2+). In terms of domain architecture, RNase H Ty1/copia-type spans 1625-1767; the sequence is DASYGNQPYY…IKTFKLLTNK (143 aa).

As to quaternary structure, the capsid protein forms a homotrimer, from which the VLPs are assembled. The protease is a homodimer, whose active site consists of two apposed aspartic acid residues. Post-translationally, initially, virus-like particles (VLPs) are composed of the structural unprocessed proteins Gag and Gag-Pol, and also contain the host initiator methionine tRNA (tRNA(i)-Met) which serves as a primer for minus-strand DNA synthesis, and a dimer of genomic Ty RNA. Processing of the polyproteins occurs within the particle and proceeds by an ordered pathway, called maturation. First, the protease (PR) is released by autocatalytic cleavage of the Gag-Pol polyprotein, and this cleavage is a prerequisite for subsequent processing at the remaining sites to release the mature structural and catalytic proteins. Maturation takes place prior to the RT reaction and is required to produce transposition-competent VLPs.

It localises to the cytoplasm. It is found in the nucleus. It catalyses the reaction DNA(n) + a 2'-deoxyribonucleoside 5'-triphosphate = DNA(n+1) + diphosphate. The enzyme catalyses Endonucleolytic cleavage to 5'-phosphomonoester.. Capsid protein (CA) is the structural component of the virus-like particle (VLP), forming the shell that encapsulates the retrotransposons dimeric RNA genome. The particles are assembled from trimer-clustered units and there are holes in the capsid shells that allow for the diffusion of macromolecules. CA also has nucleocapsid-like chaperone activity, promoting primer tRNA(i)-Met annealing to the multipartite primer-binding site (PBS), dimerization of Ty2 RNA and initiation of reverse transcription. Functionally, the aspartyl protease (PR) mediates the proteolytic cleavages of the Gag and Gag-Pol polyproteins after assembly of the VLP. In terms of biological role, reverse transcriptase/ribonuclease H (RT) is a multifunctional enzyme that catalyzes the conversion of the retro-elements RNA genome into dsDNA within the VLP. The enzyme displays a DNA polymerase activity that can copy either DNA or RNA templates, and a ribonuclease H (RNase H) activity that cleaves the RNA strand of RNA-DNA heteroduplexes during plus-strand synthesis and hydrolyzes RNA primers. The conversion leads to a linear dsDNA copy of the retrotransposon that includes long terminal repeats (LTRs) at both ends. Its function is as follows. Integrase (IN) targets the VLP to the nucleus, where a subparticle preintegration complex (PIC) containing at least integrase and the newly synthesized dsDNA copy of the retrotransposon must transit the nuclear membrane. Once in the nucleus, integrase performs the integration of the dsDNA into the host genome. This Saccharomyces cerevisiae (strain ATCC 204508 / S288c) (Baker's yeast) protein is Transposon Ty2-OR1 Gag-Pol polyprotein (TY2B-OR1).